The sequence spans 63 residues: Large ribosomal subunit protein bL28 (63 aa).

This sequence belongs to the bacterial ribosomal protein bL28 family.

The chain is Large ribosomal subunit protein bL28 from Thermomicrobium roseum (strain ATCC 27502 / DSM 5159 / P-2).